The following is a 175-amino-acid chain: EKC/KEOPS complex subunit TPRKB (175 aa).

The protein belongs to the CGI121/TPRKB family. As to quaternary structure, component of the EKC/KEOPS complex.

The protein localises to the cytoplasm. Its subcellular location is the cytosol. It is found in the nucleus. Its function is as follows. Component of the EKC/KEOPS complex that is required for the formation of a threonylcarbamoyl group on adenosine at position 37 (t(6)A37) in tRNAs that read codons beginning with adenine. The complex is probably involved in the transfer of the threonylcarbamoyl moiety of threonylcarbamoyl-AMP (TC-AMP) to the N6 group of A37. Tprkb acts as an allosteric effector that regulates the t(6)A activity of the complex. The polypeptide is EKC/KEOPS complex subunit TPRKB (Danio rerio (Zebrafish)).